The sequence spans 322 residues: Eukaryotic translation initiation factor 3 subunit I (322 aa).

WD repeat units follow at residues 4-43 (GHER…RLGT), 46-85 (GHQG…VIAS), 141-180 (MVES…KVVD), 184-223 (DHTA…CLKT), and 281-322 (GHFG…NIFE).

It belongs to the eIF-3 subunit I family. Component of the eukaryotic translation initiation factor 3 (eIF-3) complex. The eIF-3 complex interacts with pix.

It is found in the cytoplasm. Its function is as follows. Component of the eukaryotic translation initiation factor 3 (eIF-3) complex, which is involved in protein synthesis of a specialized repertoire of mRNAs and, together with other initiation factors, stimulates binding of mRNA and methionyl-tRNAi to the 40S ribosome. The eIF-3 complex specifically targets and initiates translation of a subset of mRNAs involved in cell proliferation. The sequence is that of Eukaryotic translation initiation factor 3 subunit I from Drosophila mojavensis (Fruit fly).